The following is a 156-amino-acid chain: UPF0266 membrane protein NT01EI_1718 (156 aa).

The next 3 membrane-spanning stretches (helical) occupy residues 6–26 (IALLVFIVLFLLYAIYDEAIM), 46–63 (DSLIFIGLLAILVYRNIS), and 67–87 (APFTTWLLATLMVVAIYIFYL).

Belongs to the UPF0266 family.

It localises to the cell inner membrane. This Edwardsiella ictaluri (strain 93-146) protein is UPF0266 membrane protein NT01EI_1718.